The chain runs to 276 residues: Large ribosomal subunit protein uL2 (276 aa).

Disordered stretches follow at residues 14–58 (RNAS…GGGH) and 219–276 (PITR…KNRK). Residues 16-27 (ASVSDFSELTRS) are compositionally biased toward polar residues. The segment covering 255–276 (RRPKKASNKMIVRRRPSGKNRK) has biased composition (basic residues).

This sequence belongs to the universal ribosomal protein uL2 family. Part of the 50S ribosomal subunit. Forms a bridge to the 30S subunit in the 70S ribosome.

Its function is as follows. One of the primary rRNA binding proteins. Required for association of the 30S and 50S subunits to form the 70S ribosome, for tRNA binding and peptide bond formation. It has been suggested to have peptidyltransferase activity; this is somewhat controversial. Makes several contacts with the 16S rRNA in the 70S ribosome. The chain is Large ribosomal subunit protein uL2 from Bifidobacterium longum (strain DJO10A).